The chain runs to 114 residues: Progonadoliberin-2 (114 aa).

Residues Met-1 to Ala-24 form the signal peptide. Gly-34 is modified (glycine amide). Positions Gly-35–Ala-59 are disordered.

Belongs to the GnRH family.

It localises to the secreted. In terms of biological role, stimulates the secretion of gonadotropins; it stimulates the secretion of both luteinizing and follicle-stimulating hormones. This chain is Progonadoliberin-2 (GNRH2), found in Macaca mulatta (Rhesus macaque).